A 347-amino-acid chain; its full sequence is NADH-ubiquinone oxidoreductase chain 2 (347 aa).

11 consecutive transmembrane segments (helical) span residues Met1–Met21, His25–Met45, Tyr59–Thr79, Ile96–Pro116, Cys127–Pro147, Ile149–Gly169, Ile178–Pro198, Met200–Ile220, Ile247–Ile267, Ile276–Leu296, and Leu325–Leu345.

It belongs to the complex I subunit 2 family. In terms of assembly, core subunit of respiratory chain NADH dehydrogenase (Complex I) which is composed of 45 different subunits. Interacts with TMEM242.

The protein resides in the mitochondrion inner membrane. The catalysed reaction is a ubiquinone + NADH + 5 H(+)(in) = a ubiquinol + NAD(+) + 4 H(+)(out). In terms of biological role, core subunit of the mitochondrial membrane respiratory chain NADH dehydrogenase (Complex I) which catalyzes electron transfer from NADH through the respiratory chain, using ubiquinone as an electron acceptor. Essential for the catalytic activity and assembly of complex I. This chain is NADH-ubiquinone oxidoreductase chain 2, found in Natalus stramineus (Mexican funnel-eared bat).